A 751-amino-acid chain; its full sequence is Dual specificity tyrosine-phosphorylation-regulated kinase 1A (751 aa).

Residues 59 to 68 (YNDQIQQPLP) are compositionally biased toward polar residues. 2 disordered regions span residues 59-81 (YNDQ…RDPA) and 104-129 (YAKK…KVYN). The short motif at 109–126 (RRHQQGQGDDSSHKKERK) is the Bipartite nuclear localization signal element. The 321-residue stretch at 151-471 (YEIDSLIGKG…PYYALQHSFF (321 aa)) folds into the Protein kinase domain. ATP-binding positions include 157-165 (IGKGSFGQV), Lys-180, and 230-233 (FEML). The Proton acceptor role is filled by Asp-279. Over residues 477–493 (EGTNTSNSVSTSPAMEQ) the composition is skewed to polar residues. Disordered stretches follow at residues 477–532 (EGTN…HSGG), 580–667 (HVPS…GNQA), and 730–751 (GMDR…VASS). Low complexity predominate over residues 494-517 (SQSSGTTSSTSSSSGGSSGTSNSG). Residues 585–613 (QQNVPHHHGNGSHHHHHHHHHHHGQHVLS) form a histidine-rich domain (HRD) region. Residues 589-609 (PHHHGNGSHHHHHHHHHHHGQ) show a composition bias toward basic residues. Polar residues predominate over residues 611–622 (VLSNRTRTRIYN). Composition is skewed to low complexity over residues 623–633 (SPSTSSSTQDS) and 642–660 (SMTS…SSST). Polar residues predominate over residues 742 to 751 (CVQQSPVASS).

This sequence belongs to the protein kinase superfamily. CMGC Ser/Thr protein kinase family. MNB/DYRK subfamily. Autophosphorylated on tyrosine residues.

It is found in the nucleus. Its subcellular location is the nucleus speckle. The enzyme catalyses L-seryl-[protein] + ATP = O-phospho-L-seryl-[protein] + ADP + H(+). It catalyses the reaction L-threonyl-[protein] + ATP = O-phospho-L-threonyl-[protein] + ADP + H(+). It carries out the reaction L-tyrosyl-[protein] + ATP = O-phospho-L-tyrosyl-[protein] + ADP + H(+). The catalysed reaction is [DNA-directed RNA polymerase] + ATP = phospho-[DNA-directed RNA polymerase] + ADP + H(+). Dual-specificity kinase which possesses both serine/threonine and tyrosine kinase activities. Exhibits a substrate preference for proline at position P+1 and arginine at position P-3. Plays an important role in double-strand breaks (DSBs) repair following DNA damage. Mechanistically, phosphorylates RNF169 and increases its ability to block accumulation of TP53BP1 at the DSB sites thereby promoting homologous recombination repair (HRR). Also acts as a positive regulator of transcription by acting as a CTD kinase that mediates phosphorylation of the CTD (C-terminal domain) of the large subunit of RNA polymerase II (RNAP II) POLR2A. Modulates alternative splicing by phosphorylating the splice factor SRSF6. Phosphorylates SEPTIN4, SEPTIN5 and SF3B1. In Xenopus tropicalis (Western clawed frog), this protein is Dual specificity tyrosine-phosphorylation-regulated kinase 1A.